Consider the following 27-residue polypeptide: Ferric reductase B (27 aa).

In terms of assembly, homodimer. Requires FAD as cofactor.

It carries out the reaction 2 a Fe(II)-siderophore + NAD(+) + H(+) = 2 a Fe(III)-siderophore + NADH. Functionally, reductase activity that acts on Fe(3+)-chelates and uses both NADH and NADPH as electron donors. May play a role in iron uptake. This is Ferric reductase B (ferB) from Paracoccus denitrificans.